A 351-amino-acid polypeptide reads, in one-letter code: Histidinol-phosphate aminotransferase 1 (351 aa).

K210 carries the N6-(pyridoxal phosphate)lysine modification.

This sequence belongs to the class-II pyridoxal-phosphate-dependent aminotransferase family. Histidinol-phosphate aminotransferase subfamily. In terms of assembly, homodimer. Pyridoxal 5'-phosphate is required as a cofactor.

It catalyses the reaction L-histidinol phosphate + 2-oxoglutarate = 3-(imidazol-4-yl)-2-oxopropyl phosphate + L-glutamate. The protein operates within amino-acid biosynthesis; L-histidine biosynthesis; L-histidine from 5-phospho-alpha-D-ribose 1-diphosphate: step 7/9. In Pasteurella multocida (strain Pm70), this protein is Histidinol-phosphate aminotransferase 1 (hisC1).